Reading from the N-terminus, the 372-residue chain is C-X-C chemokine receptor type 5 (372 aa).

At 1–55 the chain is on the extracellular side; the sequence is MNYPLTLEMDLENLEDLFWELDRLDNYNDTSLVENHLCPATEGPLMASFKAVFVP. N-linked (GlcNAc...) asparagine glycosylation is present at N28. A helical transmembrane segment spans residues 56–76; the sequence is VAYSLIFLLGVIGNVLVLVIL. The Cytoplasmic portion of the chain corresponds to 77–88; sequence ERHRQTRSSTET. Residues 89-109 form a helical membrane-spanning segment; the sequence is FLFHLAVADLLLVFILPFAVA. Over 110–124 the chain is Extracellular; that stretch reads EGSVGWVLGTFLCKT. C122 and C202 are disulfide-bonded. A helical membrane pass occupies residues 125–145; that stretch reads VIALHKVNFYCSSLLLACIAV. At 146–167 the chain is on the cytoplasmic side; that stretch reads DRYLAIVHAVHAYRHRRLLSIH. A helical transmembrane segment spans residues 168–188; it reads ITCGTIWLVGFLLALPEILFA. Over 189-219 the chain is Extracellular; the sequence is KVSQGHHNNSLPRCTFSQENQAETHAWFTSR. The N-linked (GlcNAc...) asparagine glycan is linked to N196. The helical transmembrane segment at 220 to 240 threads the bilayer; sequence FLYHVAGFLLPMLVMGWCYVG. Residues 241–259 lie on the Cytoplasmic side of the membrane; the sequence is VVHRLRQAQRRPQRQKAVR. Residues 260 to 280 traverse the membrane as a helical segment; the sequence is VAILVTSIFFLCWSPYHIVIF. Topologically, residues 281-304 are extracellular; the sequence is LDTLARLKAVDNTCKLNGSLPVAI. Residues 305 to 325 form a helical membrane-spanning segment; it reads TMCEFLGLAHCCLNPMLYTFA. At 326–372 the chain is on the cytoplasmic side; sequence GVKFRSDLSRLLTKLGCTGPASLCQLFPSWRRSSLSESENATSLTTF.

It belongs to the G-protein coupled receptor 1 family. As to expression, expression in mature B-cells and Burkitt lymphoma cells.

It localises to the cell membrane. In terms of biological role, cytokine receptor that binds to B-lymphocyte chemoattractant (BLC). Involved in B-cell migration into B-cell follicles of spleen and Peyer patches but not into those of mesenteric or peripheral lymph nodes. May have a regulatory function in Burkitt lymphoma (BL) lymphomagenesis and/or B-cell differentiation. The protein is C-X-C chemokine receptor type 5 (CXCR5) of Homo sapiens (Human).